The sequence spans 276 residues: METLELQGAKLRYHQVGQRPVLIFIPGANGTGDIFLPLAEQLKDHFTVVAVDRRDYGESELTEPLPDSASNPDSDYRVKRDAQDIAELAKSLSDEPVYILGSSSGSIVAMHVLKDYPEVVKKIAFHEPPINTFLPDSTYWKDKNDDIVHQILTEGLEKGMKTFGETLNIAPIDAKMMSQPADTEKGRIEQYKRTMFWSEFEIRQYTHSDITLDDFTKYSDKITLLNGTDSRDSFPQDVNFYINKETGIPIVDIPGGHLGYIQKPEGFADVLLNMWG.

The AB hydrolase-1 domain occupies 20–137 (PVLIFIPGAN…PPINTFLPDS (118 aa)). Residues 57–76 (GESELTEPLPDSASNPDSDY) form a disordered region.

The protein belongs to the AB hydrolase superfamily.

This is an uncharacterized protein from Staphylococcus aureus (strain bovine RF122 / ET3-1).